A 206-amino-acid chain; its full sequence is Large ribosomal subunit protein uL4 (206 aa).

The interval 47–77 (GTQSTKTRSEVRGGGIKPWRQKGTGRARQGS) is disordered.

It belongs to the universal ribosomal protein uL4 family. As to quaternary structure, part of the 50S ribosomal subunit.

Its function is as follows. One of the primary rRNA binding proteins, this protein initially binds near the 5'-end of the 23S rRNA. It is important during the early stages of 50S assembly. It makes multiple contacts with different domains of the 23S rRNA in the assembled 50S subunit and ribosome. In terms of biological role, forms part of the polypeptide exit tunnel. The polypeptide is Large ribosomal subunit protein uL4 (Clostridium beijerinckii (strain ATCC 51743 / NCIMB 8052) (Clostridium acetobutylicum)).